We begin with the raw amino-acid sequence, 28 residues long: Probable small spore coat assembly protein B (28 aa).

The helical transmembrane segment at 4 to 24 (VFAGGFALLVVLFILLIIIGA) threads the bilayer.

Belongs to the SscA family.

It is found in the membrane. The protein is Probable small spore coat assembly protein B of Bacillus subtilis (strain 168).